A 336-amino-acid polypeptide reads, in one-letter code: Secreted effector protein SifA (336 aa).

The tract at residues 1–330 is interaction with host PLEKHM2; that stretch reads MPITIGNGFL…LHVRSEQQSG (330 aa).

This sequence belongs to the Sif family. As to quaternary structure, interacts with host PLEKHM2. Interacts with SseJ; the interaction is indirect.

It is found in the secreted. The protein resides in the host cytoplasm. The protein localises to the host cell membrane. In terms of biological role, effector proteins function to alter host cell physiology and promote bacterial survival in host tissues. This protein is required for endosomal tubulation and formation of Salmonella-induced filaments (Sifs), which are filamentous structures containing lysosomal membrane glycoproteins within epithelial cells. Sif formation is concomitant with intracellular bacterial replication. In Salmonella typhimurium (strain LT2 / SGSC1412 / ATCC 700720), this protein is Secreted effector protein SifA (sifA).